The primary structure comprises 237 residues: Small ribosomal subunit protein uS5 (237 aa).

The tract at residues 1–59 is disordered; that stretch reads MADETNLEGVAAVEATGGEPQREGRGRGRGRGGNDRGGERGGRGRRDDRRGRGNNDEEG. The segment covering 20–55 has biased composition (basic and acidic residues); sequence PQREGRGRGRGRGGNDRGGERGGRGRRDDRRGRGNN. The region spanning 63–126 is the S5 DRBM domain; the sequence is LIEKLVHINR…AAAKRAMVRV (64 aa).

This sequence belongs to the universal ribosomal protein uS5 family. As to quaternary structure, part of the 30S ribosomal subunit. Contacts proteins S4 and S8.

Functionally, with S4 and S12 plays an important role in translational accuracy. Its function is as follows. Located at the back of the 30S subunit body where it stabilizes the conformation of the head with respect to the body. This chain is Small ribosomal subunit protein uS5, found in Novosphingobium aromaticivorans (strain ATCC 700278 / DSM 12444 / CCUG 56034 / CIP 105152 / NBRC 16084 / F199).